Here is a 121-residue protein sequence, read N- to C-terminus: Large ribosomal subunit protein uL14c (121 aa).

The protein belongs to the universal ribosomal protein uL14 family. Part of the 50S ribosomal subunit.

The protein localises to the plastid. The protein resides in the chloroplast. In terms of biological role, binds to 23S rRNA. The chain is Large ribosomal subunit protein uL14c from Phaeodactylum tricornutum (strain CCAP 1055/1).